The following is an 89-amino-acid chain: Phosphocarrier protein HPr (89 aa).

Residues 1–88 (MLQRDTTIIN…ALIANRFGEG (88 aa)) enclose the HPr domain. His15 acts as the Pros-phosphohistidine intermediate in catalysis.

It belongs to the HPr family.

It is found in the cytoplasm. Its function is as follows. General (non sugar-specific) component of the phosphoenolpyruvate-dependent sugar phosphotransferase system (sugar PTS). This major carbohydrate active-transport system catalyzes the phosphorylation of incoming sugar substrates concomitantly with their translocation across the cell membrane. The phosphoryl group from phosphoenolpyruvate (PEP) is transferred to the phosphoryl carrier protein HPr by enzyme I. Phospho-HPr then transfers it to the PTS EIIA domain. The protein is Phosphocarrier protein HPr (phbH) of Cupriavidus necator (strain ATCC 17699 / DSM 428 / KCTC 22496 / NCIMB 10442 / H16 / Stanier 337) (Ralstonia eutropha).